The primary structure comprises 400 residues: Transposase for insertion sequence element ISRM3 (400 aa).

Belongs to the transposase mutator family.

Functionally, required for the transposition of the insertion element. This Rhizobium meliloti (strain 1021) (Ensifer meliloti) protein is Transposase for insertion sequence element ISRM3.